Consider the following 257-residue polypeptide: Putative cysteine-rich repeat secretory protein 28 (257 aa).

An N-terminal signal peptide occupies residues 1 to 26; sequence MFSTFGSVPILTVVAIQLFLIRNVLS. Gnk2-homologous domains follow at residues 32 to 136 and 142 to 254; these read AYLH…TVDS and YEND…LYPF.

This sequence belongs to the cysteine-rich repeat secretory protein family.

The protein resides in the secreted. The sequence is that of Putative cysteine-rich repeat secretory protein 28 (CRRSP28) from Arabidopsis thaliana (Mouse-ear cress).